Reading from the N-terminus, the 378-residue chain is Queuine tRNA-ribosyltransferase (378 aa).

Asp90 serves as the catalytic Proton acceptor. Residues 90–94 (DSGGY), Asp152, Gln194, and Gly223 contribute to the substrate site. The tract at residues 254-260 (GVGKPED) is RNA binding. Asp273 serves as the catalytic Nucleophile. An RNA binding; important for wobble base 34 recognition region spans residues 278 to 282 (TRNAR). Zn(2+) contacts are provided by Cys311, Cys313, Cys316, and His342.

It belongs to the queuine tRNA-ribosyltransferase family. In terms of assembly, homodimer. Within each dimer, one monomer is responsible for RNA recognition and catalysis, while the other monomer binds to the replacement base PreQ1. Requires Zn(2+) as cofactor.

The enzyme catalyses 7-aminomethyl-7-carbaguanine + guanosine(34) in tRNA = 7-aminomethyl-7-carbaguanosine(34) in tRNA + guanine. It participates in tRNA modification; tRNA-queuosine biosynthesis. Catalyzes the base-exchange of a guanine (G) residue with the queuine precursor 7-aminomethyl-7-deazaguanine (PreQ1) at position 34 (anticodon wobble position) in tRNAs with GU(N) anticodons (tRNA-Asp, -Asn, -His and -Tyr). Catalysis occurs through a double-displacement mechanism. The nucleophile active site attacks the C1' of nucleotide 34 to detach the guanine base from the RNA, forming a covalent enzyme-RNA intermediate. The proton acceptor active site deprotonates the incoming PreQ1, allowing a nucleophilic attack on the C1' of the ribose to form the product. After dissociation, two additional enzymatic reactions on the tRNA convert PreQ1 to queuine (Q), resulting in the hypermodified nucleoside queuosine (7-(((4,5-cis-dihydroxy-2-cyclopenten-1-yl)amino)methyl)-7-deazaguanosine). The sequence is that of Queuine tRNA-ribosyltransferase from Aquifex aeolicus (strain VF5).